We begin with the raw amino-acid sequence, 201 residues long: UPF0301 protein MMAR_0053 (201 aa).

Belongs to the UPF0301 (AlgH) family.

In Mycobacterium marinum (strain ATCC BAA-535 / M), this protein is UPF0301 protein MMAR_0053.